The sequence spans 256 residues: L-erythrulose-1-phosphate isomerase (256 aa).

His-96 (electrophile) is an active-site residue. The active-site Proton acceptor is the Glu-169. Residues Gly-175 and Ser-212 each coordinate substrate.

This sequence belongs to the triosephosphate isomerase family. In terms of assembly, homodimer.

Its subcellular location is the cytoplasm. It carries out the reaction L-erythrulose 1-phosphate = D-erythrulose 4-phosphate. Its pathway is carbohydrate metabolism; erythritol degradation. In terms of biological role, catalyzes the isomerization of D-erythrulose-4P to L-erythrulose-1P. The polypeptide is L-erythrulose-1-phosphate isomerase (Brucella melitensis biotype 1 (strain ATCC 23456 / CCUG 17765 / NCTC 10094 / 16M)).